A 477-amino-acid chain; its full sequence is ATP synthase subunit beta (477 aa).

155–162 (GGAGVGKT) provides a ligand contact to ATP.

It belongs to the ATPase alpha/beta chains family. As to quaternary structure, F-type ATPases have 2 components, CF(1) - the catalytic core - and CF(0) - the membrane proton channel. CF(1) has five subunits: alpha(3), beta(3), gamma(1), delta(1), epsilon(1). CF(0) has three main subunits: a(1), b(2) and c(9-12). The alpha and beta chains form an alternating ring which encloses part of the gamma chain. CF(1) is attached to CF(0) by a central stalk formed by the gamma and epsilon chains, while a peripheral stalk is formed by the delta and b chains.

The protein localises to the cell inner membrane. It catalyses the reaction ATP + H2O + 4 H(+)(in) = ADP + phosphate + 5 H(+)(out). Its function is as follows. Produces ATP from ADP in the presence of a proton gradient across the membrane. The catalytic sites are hosted primarily by the beta subunits. The protein is ATP synthase subunit beta of Mesorhizobium japonicum (strain LMG 29417 / CECT 9101 / MAFF 303099) (Mesorhizobium loti (strain MAFF 303099)).